A 247-amino-acid polypeptide reads, in one-letter code: tRNA pseudouridine synthase A (247 aa).

Catalysis depends on aspartate 53, which acts as the Nucleophile. Substrate is bound at residue tyrosine 111.

This sequence belongs to the tRNA pseudouridine synthase TruA family. Homodimer.

The enzyme catalyses uridine(38/39/40) in tRNA = pseudouridine(38/39/40) in tRNA. Formation of pseudouridine at positions 38, 39 and 40 in the anticodon stem and loop of transfer RNAs. The polypeptide is tRNA pseudouridine synthase A (Bacillus pumilus (strain SAFR-032)).